The chain runs to 844 residues: MAAFSQYPLSTGWSFKDSDDQSPEAWMPVPVVPSVAHQDLQANQKLKNPYIGFNELDARWVNDKSWTYRTVFQKPAVAAGSSIILAFDGLDTFATVKLDGSVILQSDNMFLAHRVDVTKALEAEGDHVLEIDFDCAMRRARELREKDTKHNWASFNGDPARMAVRKAQYHWGWDWGPLLSTAGIWREVRLEVYSAKISDLWTEVELASDHQTARVSAFAEVDAADSVDSYKASFLLSLHGKEVAREVATLKDKVANVTFDVTQPSLWWPNGYGDPALYEISVSLEKEDCEIHSVSKKIGIRTAELIQQPDRHGKSFFFRINGVDVFCGGSCWIPADNLLPSITAERYRKWIELMVAGRQVMIRVWGGGCYEDDSFYQACDELGVLVWQDFMFGCGNYPTWPELLESIEKEANYNVRRLRHHPSIVVYVGNNEDYQVQESAGLVYDYEDKNPENWLKTDFPARYIYEKLLPSVVEKLSPKTVYHPGSPWGDGKITSDPTVGDMHQWNVWHGTQEKYQIFDTLGGRFNSEFGMEAFPHMSTIEYFVENEADKYPQSHVLDFHNKADGHERRIATYLVENLRTATDLETYVYLTQVVQAETMMFGYRGWRRQWGDERHCGGALLWQLNDCWPTISWAIVDYFLRPKPAFYAVARVLKPIAVGVRREHHDWSVTHAQPPKTSKYELWIASSLQKETVGTIELRFLSVNTGLDVRAPILRDNVKIVPNGTTNILEGVIDHKAQPEPHVLAARLWVDGEVTARDVDWPQPFKYLDLSDRGLEVNKVSESGNEQKLLITAKKPVKCLVFEERDGIRVSDSAMDIVPGDGQTVTVTGLKAGDAPLKYKYLGQ.

The active-site Proton donor is the glutamate 432.

The protein belongs to the glycosyl hydrolase 2 family. Beta-mannosidase B subfamily.

It catalyses the reaction Hydrolysis of terminal, non-reducing beta-D-mannose residues in beta-D-mannosides.. It functions in the pathway glycan metabolism; N-glycan degradation. Functionally, exoglycosidase that cleaves the single beta-linked mannose residue from the non-reducing end of beta-mannosidic oligosaccharides of various complexity and length. Prefers mannobiose over mannotriose and has no activity against polymeric mannan. Is also severely restricted by galactosyl substitutions at the +1 subsite. This chain is Beta-mannosidase B (mndB), found in Aspergillus oryzae (strain ATCC 42149 / RIB 40) (Yellow koji mold).